Reading from the N-terminus, the 396-residue chain is Elongation factor Tu (396 aa).

The 196-residue stretch at Lys-10–Val-205 folds into the tr-type G domain. The interval Gly-19 to Thr-26 is G1. Position 19–26 (Gly-19–Thr-26) interacts with GTP. Thr-26 serves as a coordination point for Mg(2+). The interval Gly-62–Asn-66 is G2. Residues Asp-83–Gly-86 are G3. Residues Asp-83–His-87 and Asn-138–Asp-141 each bind GTP. Positions Asn-138–Asp-141 are G4. Positions Ser-175–Leu-177 are G5.

It belongs to the TRAFAC class translation factor GTPase superfamily. Classic translation factor GTPase family. EF-Tu/EF-1A subfamily. In terms of assembly, monomer.

The protein localises to the cytoplasm. The enzyme catalyses GTP + H2O = GDP + phosphate + H(+). In terms of biological role, GTP hydrolase that promotes the GTP-dependent binding of aminoacyl-tRNA to the A-site of ribosomes during protein biosynthesis. This Nocardia farcinica (strain IFM 10152) protein is Elongation factor Tu.